The sequence spans 187 residues: Elongation factor P (187 aa).

Belongs to the elongation factor P family.

The protein resides in the cytoplasm. The protein operates within protein biosynthesis; polypeptide chain elongation. Involved in peptide bond synthesis. Stimulates efficient translation and peptide-bond synthesis on native or reconstituted 70S ribosomes in vitro. Probably functions indirectly by altering the affinity of the ribosome for aminoacyl-tRNA, thus increasing their reactivity as acceptors for peptidyl transferase. This Chromobacterium violaceum (strain ATCC 12472 / DSM 30191 / JCM 1249 / CCUG 213 / NBRC 12614 / NCIMB 9131 / NCTC 9757 / MK) protein is Elongation factor P.